We begin with the raw amino-acid sequence, 445 residues long: Exodeoxyribonuclease 7 large subunit (445 aa).

This sequence belongs to the XseA family. As to quaternary structure, heterooligomer composed of large and small subunits.

The protein resides in the cytoplasm. The enzyme catalyses Exonucleolytic cleavage in either 5'- to 3'- or 3'- to 5'-direction to yield nucleoside 5'-phosphates.. Functionally, bidirectionally degrades single-stranded DNA into large acid-insoluble oligonucleotides, which are then degraded further into small acid-soluble oligonucleotides. In Pasteurella multocida (strain Pm70), this protein is Exodeoxyribonuclease 7 large subunit.